The following is a 271-amino-acid chain: Glutamate racemase (271 aa).

Residues 12-13 (DS) and 44-45 (YG) contribute to the substrate site. Cys-75 acts as the Proton donor/acceptor in catalysis. Substrate is bound at residue 76–77 (NT). Cys-185 (proton donor/acceptor) is an active-site residue. 186-187 (TH) contacts substrate.

It belongs to the aspartate/glutamate racemases family.

The catalysed reaction is L-glutamate = D-glutamate. Its pathway is cell wall biogenesis; peptidoglycan biosynthesis. In terms of biological role, provides the (R)-glutamate required for cell wall biosynthesis. In Methylococcus capsulatus (strain ATCC 33009 / NCIMB 11132 / Bath), this protein is Glutamate racemase.